We begin with the raw amino-acid sequence, 361 residues long: 3-dehydroquinate synthase (361 aa).

Residues G104 to D108, T128 to T129, K141, K150, and F168 to T171 each bind NAD(+). Residues E183, H246, and H263 each contribute to the Zn(2+) site.

Belongs to the sugar phosphate cyclases superfamily. Dehydroquinate synthase family. It depends on Co(2+) as a cofactor. The cofactor is Zn(2+). NAD(+) is required as a cofactor.

It localises to the cytoplasm. It carries out the reaction 7-phospho-2-dehydro-3-deoxy-D-arabino-heptonate = 3-dehydroquinate + phosphate. Its pathway is metabolic intermediate biosynthesis; chorismate biosynthesis; chorismate from D-erythrose 4-phosphate and phosphoenolpyruvate: step 2/7. In terms of biological role, catalyzes the conversion of 3-deoxy-D-arabino-heptulosonate 7-phosphate (DAHP) to dehydroquinate (DHQ). This is 3-dehydroquinate synthase from Opitutus terrae (strain DSM 11246 / JCM 15787 / PB90-1).